A 376-amino-acid chain; its full sequence is N-acetyldiaminopimelate deacetylase (376 aa).

Residue Asp-69 is part of the active site. Residue Glu-128 is the Proton acceptor of the active site.

This sequence belongs to the peptidase M20A family. N-acetyldiaminopimelate deacetylase subfamily.

The catalysed reaction is N-acetyl-(2S,6S)-2,6-diaminopimelate + H2O = (2S,6S)-2,6-diaminopimelate + acetate. It functions in the pathway amino-acid biosynthesis; L-lysine biosynthesis via DAP pathway; LL-2,6-diaminopimelate from (S)-tetrahydrodipicolinate (acetylase route): step 3/3. In terms of biological role, catalyzes the conversion of N-acetyl-diaminopimelate to diaminopimelate and acetate. The protein is N-acetyldiaminopimelate deacetylase of Streptococcus uberis (strain ATCC BAA-854 / 0140J).